The primary structure comprises 299 residues: Bifunctional methyltransferase-like/endonuclease (299 aa).

Residues 1–80 are probable methylated-DNA--protein-cysteine methyltransferase-like; it reads MLSSKLLDIN…NLIVSPMQKA (80 aa). The interval 81–299 is endonuclease V; sequence LLEKEVKIIG…GRGDSNPGRD (219 aa). Mg(2+) is bound by residues Asp-135 and Asn-197.

It in the N-terminal section; belongs to the MGMT family. The protein in the C-terminal section; belongs to the endonuclease V family. It depends on Mg(2+) as a cofactor.

It localises to the cytoplasm. The catalysed reaction is Endonucleolytic cleavage at apurinic or apyrimidinic sites to products with a 5'-phosphate.. DNA repair enzyme involved in the repair of deaminated bases. Selectively cleaves double-stranded DNA at the second phosphodiester bond 3' to a deoxyinosine leaving behind the intact lesion on the nicked DNA. The polypeptide is Bifunctional methyltransferase-like/endonuclease (Nanoarchaeum equitans (strain Kin4-M)).